A 505-amino-acid chain; its full sequence is Probable cytosol aminopeptidase (505 aa).

2 residues coordinate Mn(2+): Lys268 and Asp273. Residue Lys280 is part of the active site. Positions 291, 350, and 352 each coordinate Mn(2+). Arg354 is a catalytic residue.

Belongs to the peptidase M17 family. The cofactor is Mn(2+).

It localises to the cytoplasm. It carries out the reaction Release of an N-terminal amino acid, Xaa-|-Yaa-, in which Xaa is preferably Leu, but may be other amino acids including Pro although not Arg or Lys, and Yaa may be Pro. Amino acid amides and methyl esters are also readily hydrolyzed, but rates on arylamides are exceedingly low.. It catalyses the reaction Release of an N-terminal amino acid, preferentially leucine, but not glutamic or aspartic acids.. Functionally, presumably involved in the processing and regular turnover of intracellular proteins. Catalyzes the removal of unsubstituted N-terminal amino acids from various peptides. The polypeptide is Probable cytosol aminopeptidase (Syntrophobacter fumaroxidans (strain DSM 10017 / MPOB)).